Reading from the N-terminus, the 261-residue chain is 4-hydroxy-tetrahydrodipicolinate reductase (261 aa).

Glycine 9–methionine 14 contacts NAD(+). Arginine 36 is an NADP(+) binding site. NAD(+) is bound by residues glycine 97–threonine 99 and serine 118–methionine 121. The active-site Proton donor/acceptor is the histidine 151. A (S)-2,3,4,5-tetrahydrodipicolinate-binding site is contributed by histidine 152. The Proton donor role is filled by lysine 155. Position 161-162 (glycine 161–threonine 162) interacts with (S)-2,3,4,5-tetrahydrodipicolinate.

This sequence belongs to the DapB family.

It is found in the cytoplasm. The catalysed reaction is (S)-2,3,4,5-tetrahydrodipicolinate + NAD(+) + H2O = (2S,4S)-4-hydroxy-2,3,4,5-tetrahydrodipicolinate + NADH + H(+). It carries out the reaction (S)-2,3,4,5-tetrahydrodipicolinate + NADP(+) + H2O = (2S,4S)-4-hydroxy-2,3,4,5-tetrahydrodipicolinate + NADPH + H(+). The protein operates within amino-acid biosynthesis; L-lysine biosynthesis via DAP pathway; (S)-tetrahydrodipicolinate from L-aspartate: step 4/4. Catalyzes the conversion of 4-hydroxy-tetrahydrodipicolinate (HTPA) to tetrahydrodipicolinate. The sequence is that of 4-hydroxy-tetrahydrodipicolinate reductase from Wolbachia pipientis wMel.